The chain runs to 536 residues: 2-isopropylmalate synthase (536 aa).

The Pyruvate carboxyltransferase domain maps to 8–269 (IIIFDTTLRD…YYNPFLGRPV (262 aa)). Asp-17, His-208, His-210, and Asn-244 together coordinate Mn(2+). The segment at 408–536 (RLELVQVSCG…KEKAAVTSAS (129 aa)) is regulatory domain.

The protein belongs to the alpha-IPM synthase/homocitrate synthase family. LeuA type 1 subfamily. Homodimer. Mn(2+) serves as cofactor.

Its subcellular location is the cytoplasm. It catalyses the reaction 3-methyl-2-oxobutanoate + acetyl-CoA + H2O = (2S)-2-isopropylmalate + CoA + H(+). Its pathway is amino-acid biosynthesis; L-leucine biosynthesis; L-leucine from 3-methyl-2-oxobutanoate: step 1/4. In terms of biological role, catalyzes the condensation of the acetyl group of acetyl-CoA with 3-methyl-2-oxobutanoate (2-ketoisovalerate) to form 3-carboxy-3-hydroxy-4-methylpentanoate (2-isopropylmalate). This is 2-isopropylmalate synthase from Gloeothece citriformis (strain PCC 7424) (Cyanothece sp. (strain PCC 7424)).